We begin with the raw amino-acid sequence, 281 residues long: Nucleotide-binding protein PSHAa2554 (281 aa).

8–15 (GRSGSGKS) is a binding site for ATP. Position 56–59 (56–59 (DVRN)) interacts with GTP.

Belongs to the RapZ-like family.

Displays ATPase and GTPase activities. In Pseudoalteromonas translucida (strain TAC 125), this protein is Nucleotide-binding protein PSHAa2554.